The following is a 100-amino-acid chain: Large ribosomal subunit protein uL23 (100 aa).

Belongs to the universal ribosomal protein uL23 family. As to quaternary structure, part of the 50S ribosomal subunit. Contacts protein L29, and trigger factor when it is bound to the ribosome.

One of the early assembly proteins it binds 23S rRNA. One of the proteins that surrounds the polypeptide exit tunnel on the outside of the ribosome. Forms the main docking site for trigger factor binding to the ribosome. The polypeptide is Large ribosomal subunit protein uL23 (Aeromonas hydrophila subsp. hydrophila (strain ATCC 7966 / DSM 30187 / BCRC 13018 / CCUG 14551 / JCM 1027 / KCTC 2358 / NCIMB 9240 / NCTC 8049)).